Reading from the N-terminus, the 425-residue chain is Endoplasmic reticulum junction formation protein lunapark (425 aa).

A lipid anchor (N-myristoyl glycine) is attached at Gly2. Residues 2-45 (GGLFSRWRAKPSTVEVLENIDKEIQALEEFREKNQRLQKLWVGR) are Cytoplasmic-facing. Positions 15–41 (VEVLENIDKEIQALEEFREKNQRLQKL) form a coiled coil. A helical transmembrane segment spans residues 46-66 (LIIYSSILYLFTCLIVYLWYL). The Lumenal segment spans residues 67–77 (PDEFTARLVMT). Residues 78–98 (LPFFAFPLIIWTLRTVLIFFF) form a helical membrane-spanning segment. Topologically, residues 99–425 (SKRTERNNEA…EPSEESLVTK (327 aa)) are cytoplasmic. Residues 101 to 128 (RTERNNEALDDLKSQKKKILEEVMEKET) are a coiled coil. A phosphoserine mark is found at Ser114, Ser153, Ser177, Ser182, and Ser194. Positions 144-242 (KKAKEFEPPS…HPPGPPLARP (99 aa)) are disordered. A compositionally biased stretch (pro residues) spans 186-195 (GPPPQGPVSP). Thr211 carries the phosphothreonine modification. Ser222 carries the post-translational modification Phosphoserine. A C4-type; plays a role in ER morphology zinc finger spans residues 271–296 (CQQCFSHNGMALKEEFEYIAFRCAYC). Phosphoserine occurs at positions 316, 348, and 380. Positions 320 to 425 (RQAVEGSSST…EPSEESLVTK (106 aa)) are disordered. Residues 384 to 398 (EPAENQEETENEETS) show a composition bias toward acidic residues. A Phosphoserine modification is found at Ser411.

It belongs to the lunapark family. In terms of assembly, homodimer; homodimerization requires the C4-type zinc finger motif and decreases during mitosis in a phosphorylation-dependent manner. Myristoylated; myristoylation is necessary for the endoplasmic reticulum (ER) three-way ER tubular junction formation, but is not required neither for membrane translocation, membrane topology formation, nor for the specific localization to ER membranes. In terms of processing, phosphorylated. Phosphorylation occurs at Ser-177, Ser-182, Ser-222, Ser-316 and Ser-380 during interphase. Phosphorylation occurs at Ser-114, Ser-153, Ser-194, Thr-211 and Ser-348 during mitosis; these phosphorylations reduce both its homodimerization and the ER three-way tubular junction formation. Post-translationally, subject to proteasomal degradation following phosphorylation during mitosis. In terms of tissue distribution, expressed in most tissues at basal level, with reinforcement in distal limb buds, genital bud, and in parts of the central nervous system.

Its subcellular location is the endoplasmic reticulum membrane. Endoplasmic reticulum (ER)-shaping membrane protein that plays a role in determining ER morphology. Involved in the stabilization of nascent three-way ER tubular junctions within the ER network. May also play a role as a curvature-stabilizing protein within three-way ER tubular junction network. May be involved in limb and central nervous system development. The sequence is that of Endoplasmic reticulum junction formation protein lunapark from Mus musculus (Mouse).